The sequence spans 642 residues: 1,4-alpha-glucan branching enzyme GlgB (642 aa).

Asp304 acts as the Nucleophile in catalysis. The active-site Proton donor is Glu355.

This sequence belongs to the glycosyl hydrolase 13 family. GlgB subfamily. In terms of assembly, monomer.

The catalysed reaction is Transfers a segment of a (1-&gt;4)-alpha-D-glucan chain to a primary hydroxy group in a similar glucan chain.. It participates in glycan biosynthesis; glycogen biosynthesis. Catalyzes the formation of the alpha-1,6-glucosidic linkages in glycogen by scission of a 1,4-alpha-linked oligosaccharide from growing alpha-1,4-glucan chains and the subsequent attachment of the oligosaccharide to the alpha-1,6 position. In Streptococcus pneumoniae serotype 4 (strain ATCC BAA-334 / TIGR4), this protein is 1,4-alpha-glucan branching enzyme GlgB.